The following is a 260-amino-acid chain: Apolipoprotein A-I (260 aa).

An N-terminal signal peptide occupies residues 1–18; sequence MKFAALALALLLAVGSHA. The 3 X approximate tandem repeats stretch occupies residues 32-63; that stretch reads ARAVLDVYLTQVKDMSLRAVNQLDDPQYAEFK. Tandem repeats lie at residues 64–85 and 87–107. A 10 X approximate tandem repeats region spans residues 64-260; sequence TNLAQRIEEM…EIIAASVTKS (197 aa). A 3; half-length repeat occupies 108–118; the sequence is VDLEALKSSLA. A run of 5 repeats spans residues 119-140, 141-162, 163-184, 185-206, and 207-225. Residues 226–236 form a 9; half-length repeat; it reads VDTDALRTKIT. Repeat unit 10 spans residues 237–260; that stretch reads PLVEEIKVKMNAIFEIIAASVTKS.

It belongs to the apolipoprotein A1/A4/E family. In terms of tissue distribution, strong expression in liver with lower expression in intestine.

It localises to the secreted. Its function is as follows. Participates in the reverse transport of cholesterol from tissues to the liver for excretion by promoting cholesterol efflux from tissues and by acting as a cofactor for the lecithin cholesterol acyltransferase (LCAT). The polypeptide is Apolipoprotein A-I (apoa1) (Sparus aurata (Gilthead sea bream)).